Consider the following 240-residue polypeptide: Ion-translocating oxidoreductase complex subunit E (240 aa).

Transmembrane regions (helical) follow at residues leucine 41–valine 61, leucine 71–alanine 91, glutamate 95–glycine 115, serine 130–leucine 150, and glycine 184–leucine 204.

Belongs to the NqrDE/RnfAE family. In terms of assembly, the complex is composed of six subunits: RnfA, RnfB, RnfC, RnfD, RnfE and RnfG.

It is found in the cell inner membrane. Functionally, part of a membrane-bound complex that couples electron transfer with translocation of ions across the membrane. The polypeptide is Ion-translocating oxidoreductase complex subunit E (Pseudomonas aeruginosa (strain ATCC 15692 / DSM 22644 / CIP 104116 / JCM 14847 / LMG 12228 / 1C / PRS 101 / PAO1)).